Consider the following 38-residue polypeptide: Mu-agatoxin-Hc1b (38 aa).

Disulfide bonds link cysteine 3–cysteine 19, cysteine 10–cysteine 24, cysteine 18–cysteine 34, and cysteine 26–cysteine 32. Serine 38 bears the Serine amide mark.

Belongs to the neurotoxin 07 (Beta/delta-agtx) family. 02 (aga-3) subfamily. Expressed by the venom gland.

It localises to the secreted. Functionally, insecticidal neurotoxin that induces irreversible neuromuscular blockade in house crickets (A.domesticus). Modifies presynaptic voltage-gated sodium channels (Nav), causing them to open at the normal resting potential of the nerve. This leads to spontaneous release of neurotransmitter and repetitive action potentials in motor neurons. This Hololena curta (Funnel-web spider) protein is Mu-agatoxin-Hc1b.